The primary structure comprises 681 residues: Sodium-dependent phosphate transporter 1 (681 aa).

Helical transmembrane passes span 25–45 (NLWMLILGFIIAFVLAFSVGA), 66–86 (ACILASIFETVGSALLGAKVS), 106–126 (LMAGSVSAMFGSAVWQLVASF), 162–182 (IVMSWFVSPLLSGIMSGILFF), 201–221 (ALPIFYACTIGINLFSIMYTG), and 234–254 (GTILISVGCAVFCALIVWFFV). The disordered stretch occupies residues 266 to 295 (VKSSPSESPLMEKKSNLKEDHEETKMAPGD). Phosphoserine is present on residues Ser269 and Ser273. Residues 275–295 (LMEKKSNLKEDHEETKMAPGD) are compositionally biased toward basic and acidic residues. Residues 514–534 (VSLLFQFLQILTACFGSFAHG) form a helical membrane-spanning segment. Residues 553 to 560 (KQEASTKA) are a. The next 3 membrane-spanning stretches (helical) occupy residues 561–581 (ATPIWLLLYGGVGICMGLWVW), 602–622 (FSIELASALTVVIASNIGLPI), and 652–672 (IFMAWFVTVPISGVISAAIMA).

The protein belongs to the inorganic phosphate transporter (PiT) (TC 2.A.20) family. In terms of tissue distribution, ubiquitously expressed.

It localises to the cell membrane. The catalysed reaction is 2 Na(+)(out) + phosphate(out) = 2 Na(+)(in) + phosphate(in). Functionally, sodium-phosphate symporter which preferentially transports the monovalent form of phosphate with a stoichiometry of two sodium ions per phosphate ion. May play a role in extracellular matrix and cartilage calcification as well as in vascular calcification. Essential for cell proliferation but this function is independent of its phosphate transporter activity. (Microbial infection) May function as a retroviral receptor but do not confer infection susceptibility to Gibbon Ape Leukemia Virus (GaLV), Simian sarcoma-associated virus (SSAV) and Feline leukemia virus subgroup B (FeLV-B). The polypeptide is Sodium-dependent phosphate transporter 1 (Slc20a1) (Mus musculus (Mouse)).